The primary structure comprises 271 residues: MRVYLISFFFTAIYVVSLYTFPVARPRPSLNRNDPKVITARCISVLLASSVCCILTRLIIGPSLNVFTFPTDQVLKSLLHAATIFIGPLYEVWIVDKEYRLFFIHLKDCLSNAIAWRNIIIGPLSEELTFRCCIVPICEAAGWSRLKIIFVAPLLFGMAHIHHTYEFLLAYPNAYIAAALQTVVQFSYTTVFGWYTTHLFLSTHSLFPSFLVHAFCNSMGLPTLYGKIGNRNQTRIYYTLLLLGVLIFYMTWGITDFNNHQDFEPRLVPLN.

A run of 2 helical transmembrane segments spans residues 3 to 23 (VYLISFFFTAIYVVSLYTFPV) and 42 to 62 (CISVLLASSVCCILTRLIIGP). Active-site proton donor/acceptor residues include glutamate 126 and histidine 160. 2 consecutive transmembrane segments (helical) span residues 174–194 (AYIAAALQTVVQFSYTTVFGW) and 236–256 (IYYTLLLLGVLIFYMTWGITD).

It belongs to the peptidase U48 family.

Its subcellular location is the endoplasmic reticulum membrane. The catalysed reaction is Hydrolyzes the peptide bond -P2-(S-farnesyl or geranylgeranyl)C-P1'-P2'-P3'-COOH where P1' and P2' are amino acids with aliphatic sidechains and P3' is any C-terminal residue.. Its function is as follows. Protease involved in the processing of a variety of prenylated proteins containing the C-terminal CAAX motif, where C is a cysteine modified with an isoprenoid lipid, A is an aliphatic amino acid and X is any C-terminal amino acid. Proteolytically removes the C-terminal three residues of farnesylated proteins, leaving the prenylated cysteine as the new C-terminus. The sequence is that of Probable CAAX prenyl protease 2 from Schizosaccharomyces pombe (strain 972 / ATCC 24843) (Fission yeast).